A 38-amino-acid polypeptide reads, in one-letter code: Photosystem I reaction center subunit VIII (38 aa).

Residues 12–32 form a helical membrane-spanning segment; it reads WILIPIIGWLMPAVVMGLLFL.

It belongs to the PsaI family.

Its subcellular location is the cellular thylakoid membrane. Functionally, may help in the organization of the PsaL subunit. This is Photosystem I reaction center subunit VIII from Gloeothece citriformis (strain PCC 7424) (Cyanothece sp. (strain PCC 7424)).